A 412-amino-acid polypeptide reads, in one-letter code: Inactive serine protease 35 (412 aa).

The N-terminal stretch at 1–23 (MGAMFFGLMLFTLGWTLIDGSES) is a signal peptide. An N-linked (GlcNAc...) asparagine glycan is attached at asparagine 110. Positions 124-407 (VYGTDSRFSI…ICLWMHGDDA (284 aa)) constitute a Peptidase S1 domain. Cysteines 154 and 170 form a disulfide. Residues 192–207 (RNKGGGKRRRGSRRNR) show a composition bias toward basic residues. Positions 192–246 (RNKGGGKRRRGSRRNRREVSGAGREGSQDSLKETAKAGRRRKGSARRQRAADGRP) are disordered. A compositionally biased stretch (basic and acidic residues) spans 217 to 227 (GSQDSLKETAK). Over residues 228-239 (AGRRRKGSARRQ) the composition is skewed to basic residues.

It belongs to the peptidase S1 family.

The protein resides in the secreted. In Bos taurus (Bovine), this protein is Inactive serine protease 35 (PRSS35).